The primary structure comprises 264 residues: Proteasome assembly chaperone 2 (264 aa).

The residue at position 137 (Thr137) is a Phosphothreonine.

It belongs to the PSMG2 family. Forms a heterodimer with PSMG1. The PSMG1-PSMG2 heterodimer interacts directly with the PSMA5 and PSMA7 proteasome alpha subunits. In terms of processing, degraded by the proteasome upon completion of 20S proteasome maturation.

Its subcellular location is the nucleus. Its function is as follows. Chaperone protein which promotes assembly of the 20S proteasome as part of a heterodimer with PSMG1. The PSMG1-PSMG2 heterodimer binds to the PSMA5 and PSMA7 proteasome subunits, promotes assembly of the proteasome alpha subunits into the heteroheptameric alpha ring and prevents alpha ring dimerization. The chain is Proteasome assembly chaperone 2 from Bos taurus (Bovine).